The sequence spans 862 residues: Protein translocase subunit SecA (862 aa).

Residues glutamine 86, 104-108, and aspartate 499 each bind ATP; that span reads GEGKT. Residues cysteine 848, cysteine 850, cysteine 859, and histidine 860 each contribute to the Zn(2+) site.

The protein belongs to the SecA family. In terms of assembly, monomer and homodimer. Part of the essential Sec protein translocation apparatus which comprises SecA, SecYEG and auxiliary proteins SecDF-YajC and YidC. Zn(2+) serves as cofactor.

It localises to the cell inner membrane. Its subcellular location is the cytoplasm. It catalyses the reaction ATP + H2O + cellular proteinSide 1 = ADP + phosphate + cellular proteinSide 2.. Its function is as follows. Part of the Sec protein translocase complex. Interacts with the SecYEG preprotein conducting channel. Has a central role in coupling the hydrolysis of ATP to the transfer of proteins into and across the cell membrane, serving both as a receptor for the preprotein-SecB complex and as an ATP-driven molecular motor driving the stepwise translocation of polypeptide chains across the membrane. This chain is Protein translocase subunit SecA, found in Ehrlichia canis (strain Jake).